Here is a 443-residue protein sequence, read N- to C-terminus: Phosphomevalonate kinase ERG8 (443 aa).

160–170 (ANKTGLGSSAA) contributes to the ATP binding site.

This sequence belongs to the GHMP kinase family. Mevalonate kinase subfamily.

It catalyses the reaction (R)-5-phosphomevalonate + ATP = (R)-5-diphosphomevalonate + ADP. It functions in the pathway isoprenoid biosynthesis; isopentenyl diphosphate biosynthesis via mevalonate pathway; isopentenyl diphosphate from (R)-mevalonate: step 2/3. In terms of biological role, phosphomevalonate kinase; part of the second module of ergosterol biosynthesis pathway that includes the middle steps of the pathway. ERG8 converts 5-phosphomevalonate to 5-diphosphomevalonate. The second module is carried out in the vacuole and involves the formation of farnesyl diphosphate, which is also an important intermediate in the biosynthesis of ubiquinone, dolichol, heme and prenylated proteins. Activity by the mevalonate kinase ERG12 (FG05912) first converts mevalonate into 5-phosphomevalonate. 5-phosphomevalonate is then further converted to 5-diphosphomevalonate by the phosphomevalonate kinase ERG8 (FG09764). The diphosphomevalonate decarboxylase ERG19 (FG10424) then produces isopentenyl diphosphate. The isopentenyl-diphosphate delta-isomerase IDI1 (FG09722) then catalyzes the 1,3-allylic rearrangement of the homoallylic substrate isopentenyl (IPP) to its highly electrophilic allylic isomer, dimethylallyl diphosphate (DMAPP). Finally the farnesyl diphosphate synthase ERG20 (FG06784) catalyzes the sequential condensation of isopentenyl pyrophosphate with dimethylallyl pyrophosphate, and then with the resultant geranylpyrophosphate to the ultimate product farnesyl pyrophosphate. The polypeptide is Phosphomevalonate kinase ERG8 (Gibberella zeae (strain ATCC MYA-4620 / CBS 123657 / FGSC 9075 / NRRL 31084 / PH-1) (Wheat head blight fungus)).